A 548-amino-acid chain; its full sequence is Hydroxylamine reductase (548 aa).

[4Fe-4S] cluster-binding residues include Cys3, Cys6, Cys15, and Cys21. Hybrid [4Fe-2O-2S] cluster-binding residues include His240, Glu264, Cys308, Cys402, Cys430, Cys455, Glu490, and Lys492. Cys402 is subject to Cysteine persulfide.

This sequence belongs to the HCP family. [4Fe-4S] cluster is required as a cofactor. Hybrid [4Fe-2O-2S] cluster serves as cofactor.

Its subcellular location is the cytoplasm. The catalysed reaction is A + NH4(+) + H2O = hydroxylamine + AH2 + H(+). Catalyzes the reduction of hydroxylamine to form NH(3) and H(2)O. This is Hydroxylamine reductase from Parabacteroides distasonis (strain ATCC 8503 / DSM 20701 / CIP 104284 / JCM 5825 / NCTC 11152).